Here is a 280-residue protein sequence, read N- to C-terminus: Tritrans,polycis-undecaprenyl-diphosphate synthase (geranylgeranyl-diphosphate specific) (280 aa).

The active site involves Asp-57. Residue Asp-57 coordinates Mg(2+). Residues 58 to 61 (GNRR), Arg-70, His-74, and 102 to 104 (STE) each bind substrate. Asn-105 serves as the catalytic Proton acceptor. Substrate is bound by residues Phe-106, Arg-108, Arg-229, and 235 to 237 (RIS). Glu-248 lines the Mg(2+) pocket.

This sequence belongs to the UPP synthase family. In terms of assembly, homodimer. Requires Mg(2+) as cofactor.

The enzyme catalyses geranylgeranyl diphosphate + 7 isopentenyl diphosphate = tri-trans,hepta-cis-undecaprenyl diphosphate + 7 diphosphate. Functionally, catalyzes the sequential condensation of isopentenyl diphosphate (IPP) with geranylgeranyl diphosphate (GGPP) to yield (2Z,6Z,10Z,14Z,18Z,22Z,26Z,30E,34E,38E)-undecaprenyl diphosphate (tritrans,heptacis-UPP). It is probably the precursor of glycosyl carrier lipids. This chain is Tritrans,polycis-undecaprenyl-diphosphate synthase (geranylgeranyl-diphosphate specific), found in Methanocaldococcus jannaschii (strain ATCC 43067 / DSM 2661 / JAL-1 / JCM 10045 / NBRC 100440) (Methanococcus jannaschii).